Reading from the N-terminus, the 396-residue chain is Chaperone protein DnaJ 1 (396 aa).

In terms of domain architecture, J spans 10 to 75; that stretch reads DYYKVLGVPK…KKRKEYDEAR (66 aa). Residues 127 to 137 are compositionally biased toward gly residues; it reads LFNRGGAGPGT. Residues 127-149 are disordered; it reads LFNRGGAGPGTGTRTQPRRGQDI. The CR-type zinc-finger motif lies at 163–241; sequence GATVPLRMSS…CKGSGRAKSS (79 aa). Positions 176, 179, 192, 195, 215, 218, 229, and 232 each coordinate Zn(2+). CXXCXGXG motif repeat units lie at residues 176–183, 192–199, 215–222, and 229–236; these read CKACSGTG, CPTCVGTG, CPDCKGRG, and CEICKGSG.

It belongs to the DnaJ family. As to quaternary structure, homodimer. It depends on Zn(2+) as a cofactor.

The protein localises to the cytoplasm. Functionally, participates actively in the response to hyperosmotic and heat shock by preventing the aggregation of stress-denatured proteins and by disaggregating proteins, also in an autonomous, DnaK-independent fashion. Unfolded proteins bind initially to DnaJ; upon interaction with the DnaJ-bound protein, DnaK hydrolyzes its bound ATP, resulting in the formation of a stable complex. GrpE releases ADP from DnaK; ATP binding to DnaK triggers the release of the substrate protein, thus completing the reaction cycle. Several rounds of ATP-dependent interactions between DnaJ, DnaK and GrpE are required for fully efficient folding. Also involved, together with DnaK and GrpE, in the DNA replication of plasmids through activation of initiation proteins. This is Chaperone protein DnaJ 1 from Streptomyces avermitilis (strain ATCC 31267 / DSM 46492 / JCM 5070 / NBRC 14893 / NCIMB 12804 / NRRL 8165 / MA-4680).